A 618-amino-acid chain; its full sequence is Protein fem-1 homolog C (618 aa).

ANK repeat units lie at residues 2–31 (DLKT…DREV), 40–70 (NGAT…PVEL), 82–111 (EGAP…SVNN), 115–144 (TNST…DLEV), 148–177 (HGHT…DVNR), 181–210 (KGNT…SMEK), and 213–243 (YGMT…GLAE). 2 TPR repeats span residues 245–279 (ISAL…RHSE) and 337–370 (SYYI…QQSN). 2 ANK repeats span residues 482 to 524 (NGFS…DVNS) and 528 to 557 (DDNS…HFDS).

It belongs to the fem-1 family. As to quaternary structure, component of a CRL2 E3 ubiquitin-protein ligase complex, also named ECS (Elongin BC-CUL2/5-SOCS-box protein) complex.

Its pathway is protein modification; protein ubiquitination. Functionally, substrate-recognition component of a Cul2-RING (CRL2) E3 ubiquitin-protein ligase complex of the DesCEND (destruction via C-end degrons) pathway, which recognizes a C-degron located at the extreme C terminus of target proteins, leading to their ubiquitination and degradation. The C-degron recognized by the DesCEND pathway is usually a motif of less than ten residues and can be present in full-length proteins, truncated proteins or proteolytically cleaved forms. The CRL2(FEM1C) complex specifically recognizes proteins with an arginine at the C-terminus: recognizes and binds proteins ending with -Lys/Arg-Xaa-Arg and -Lys/Arg-Xaa-Xaa-Arg C-degrons, leading to their ubiquitination and degradation. The sequence is that of Protein fem-1 homolog C from Danio rerio (Zebrafish).